A 275-amino-acid chain; its full sequence is MEMO1 family protein Nmar_0215 (275 aa).

It belongs to the MEMO1 family.

This is MEMO1 family protein Nmar_0215 from Nitrosopumilus maritimus (strain SCM1).